The following is a 288-amino-acid chain: Disulfide-bond oxidoreductase YghU (288 aa).

Glutathione contacts are provided by residues asparagine 26, 52-54 (TPN), glutamine 87, isoleucine 101, 117-118 (ES), glutamine 151, and arginine 178. Positions 46–133 (QLYSLGTPNG…YLAEKFGYFL (88 aa)) constitute a GST N-terminal domain. The GST C-terminal domain occupies 139-265 (KRTETMNWLF…RIVNRTNGPL (127 aa)). The tract at residues 260 to 288 (RTNGPLNEQLHERHDASDFETNTEDKRQG) is disordered. Basic and acidic residues predominate over residues 268 to 288 (QLHERHDASDFETNTEDKRQG).

Belongs to the GST superfamily. Nu-class GSH transferase family. Homodimer.

Exhibits a robust glutathione (GSH)-dependent disulfide-bond reductase activity toward the model substrate, 2-hydroxyethyl disulfide; the actual physiological substrates are not known. Also displays a modest GSH-dependent peroxidase activity toward several organic hydroperoxides, such as cumene hydroperoxide and linoleic acid 13(S)-hydroperoxide, but does not reduce H(2)O(2) or tert-butyl hydroperoxide at appreciable rates. Exhibits little or no GSH transferase activity with most typical electrophilic substrates, and has no detectable transferase activity toward 1-chloro-2,4-dinitrobenzene (CDNB) with glutathionylspermidine (GspSH) as the nucleophilic substrate. This chain is Disulfide-bond oxidoreductase YghU (yghU), found in Escherichia coli (strain K12).